A 461-amino-acid chain; its full sequence is Argininosuccinate lyase (461 aa).

It belongs to the lyase 1 family. Argininosuccinate lyase subfamily.

Its subcellular location is the cytoplasm. The catalysed reaction is 2-(N(omega)-L-arginino)succinate = fumarate + L-arginine. Its pathway is amino-acid biosynthesis; L-arginine biosynthesis; L-arginine from L-ornithine and carbamoyl phosphate: step 3/3. In Chlorobium luteolum (strain DSM 273 / BCRC 81028 / 2530) (Pelodictyon luteolum), this protein is Argininosuccinate lyase.